A 315-amino-acid chain; its full sequence is FGFR1 oncogene partner 2 homolog (315 aa).

Coiled coils occupy residues 32-99 (EEAE…RAME) and 156-183 (VVQR…ISKQ). Disordered regions lie at residues 201–222 (KAVQ…SGAS) and 238–315 (PEQP…APAT). Polar residues predominate over residues 246–269 (GTTNSFNTAPVHSQSETQAPSVTL).

This sequence belongs to the SIKE family.

In Drosophila melanogaster (Fruit fly), this protein is FGFR1 oncogene partner 2 homolog.